Here is a 260-residue protein sequence, read N- to C-terminus: Proline-rich protein 33 (260 aa).

The interval Gly29–Gly132 is disordered. Residues Gly73–Ala83 are compositionally biased toward pro residues.

This Mus musculus (Mouse) protein is Proline-rich protein 33 (Prr33).